Here is a 205-residue protein sequence, read N- to C-terminus: MLEVSNLTAIRDERVLFENLQFEIKPGELVQIEGRNGTGKTTLLRIVTGLGDRDEGSIKWKGEAIEKSRDQFHQDLLFLGHQTGVKRELTAFENLRFYQSIHNSDSSSERIFHALTQVGLAGREDVPVAQLSAGQQRRVALARLWLSHQILWILDEPLTAIDKQGVKVLESLFSNHVDNGGIVILTTHQDMFADSPKLRKIKLGD.

An ABC transporter domain is found at 2–204 (LEVSNLTAIR…SPKLRKIKLG (203 aa)). 34 to 41 (GRNGTGKT) is an ATP binding site.

Belongs to the ABC transporter superfamily. CcmA exporter (TC 3.A.1.107) family. As to quaternary structure, the complex is composed of two ATP-binding proteins (CcmA) and two transmembrane proteins (CcmB).

The protein resides in the cell inner membrane. It catalyses the reaction heme b(in) + ATP + H2O = heme b(out) + ADP + phosphate + H(+). Its function is as follows. Part of the ABC transporter complex CcmAB involved in the biogenesis of c-type cytochromes; once thought to export heme, this seems not to be the case, but its exact role is uncertain. Responsible for energy coupling to the transport system. This Vibrio vulnificus (strain YJ016) protein is Cytochrome c biogenesis ATP-binding export protein CcmA.